Reading from the N-terminus, the 368-residue chain is tRNA-specific 2-thiouridylase MnmA (368 aa).

ATP is bound by residues 11–18 and M37; that span reads GMSGGVDS. Residues 97–99 form an interaction with target base in tRNA region; the sequence is NPD. C102 serves as the catalytic Nucleophile. C102 and C199 are joined by a disulfide. G127 contributes to the ATP binding site. Residues 149-151 are interaction with tRNA; sequence KDQ. Residue C199 is the Cysteine persulfide intermediate of the active site. Residues 311–312 are interaction with tRNA; the sequence is RY.

It belongs to the MnmA/TRMU family. In terms of assembly, interacts with TusE.

The protein localises to the cytoplasm. It carries out the reaction S-sulfanyl-L-cysteinyl-[protein] + uridine(34) in tRNA + AH2 + ATP = 2-thiouridine(34) in tRNA + L-cysteinyl-[protein] + A + AMP + diphosphate + H(+). In terms of biological role, catalyzes the 2-thiolation of uridine at the wobble position (U34) of tRNA(Lys), tRNA(Glu) and tRNA(Gln), leading to the formation of s(2)U34, the first step of tRNA-mnm(5)s(2)U34 synthesis. Sulfur is provided by IscS, via a sulfur-relay system. Binds ATP and its substrate tRNAs. The chain is tRNA-specific 2-thiouridylase MnmA from Escherichia coli (strain SMS-3-5 / SECEC).